The sequence spans 417 residues: Biofilm dispersion protein BdlA (417 aa).

A PAS 1 domain is found at 1–66; sequence MAALDRSMAR…RRFWERLRRG (66 aa). A PAC 1 domain is found at 67 to 114; that stretch reads EHFSGRCKRITREGRPLWLEATYNPVRDGQGRLLKVVKYASDIDAIVH. The PAS 2 domain maps to 115 to 188; sequence QEHEMQSKLD…ADLWRRLNRG (74 aa). The PAC 2 domain occupies 191–241; it reads VTGQFRRVHRNGQPVWLEASYNPVYDADGKLYKVVKFASDVSDRMRRYQAE. The Methyl-accepting transducer domain occupies 242–417; the sequence is ADNAHQAHTL…QFSRTLNADL (176 aa).

Its function is as follows. Essential for biofilm dispersion by sensing environmental cues. May be involved in sensing and transducing signals within cells, resulting in the modulation of c-di-GMP levels, swimming motility and adhesiveness of the bacterial cell surface. The protein is Biofilm dispersion protein BdlA (bdlA) of Pseudomonas aeruginosa (strain ATCC 15692 / DSM 22644 / CIP 104116 / JCM 14847 / LMG 12228 / 1C / PRS 101 / PAO1).